The sequence spans 507 residues: Glutamyl-tRNA(Gln) amidotransferase subunit A, mitochondrial (507 aa).

Residues K79 and S160 each act as charge relay system in the active site. S184 acts as the Acyl-ester intermediate in catalysis.

The protein belongs to the amidase family. GatA subfamily. Subunit of the heterotrimeric GatCAB amidotransferase (AdT) complex, composed of A, B and C subunits.

Its subcellular location is the mitochondrion. It catalyses the reaction L-glutamyl-tRNA(Gln) + L-glutamine + ATP + H2O = L-glutaminyl-tRNA(Gln) + L-glutamate + ADP + phosphate + H(+). Functionally, allows the formation of correctly charged Gln-tRNA(Gln) through the transamidation of misacylated Glu-tRNA(Gln) in the mitochondria. The reaction takes place in the presence of glutamine and ATP through an activated gamma-phospho-Glu-tRNA(Gln). In Drosophila pseudoobscura pseudoobscura (Fruit fly), this protein is Glutamyl-tRNA(Gln) amidotransferase subunit A, mitochondrial.